A 535-amino-acid chain; its full sequence is Large neutral amino acids transporter small subunit 2 (535 aa).

Over residues M1–N10 the composition is skewed to basic residues. The disordered stretch occupies residues M1 to G30. Residues M1 to S44 lie on the Cytoplasmic side of the membrane. Phosphoserine is present on residues S19, S28, and S29. Residues A45–V65 form a helical membrane-spanning segment. Residue I53 coordinates L-leucine. The Extracellular segment spans residues L66–G73. A helical transmembrane segment spans residues L74–E95. Residues L96–G116 lie on the Cytoplasmic side of the membrane. The chain crosses the membrane as a helical span at residues L117–P149. Residue N134 coordinates L-tryptophan. Residues L150–P157 lie on the Extracellular side of the membrane. The helical transmembrane segment at D158–S178 threads the bilayer. Over S179–R181 the chain is Cytoplasmic. Residues W182–C210 traverse the membrane as a helical segment. Residues K211 to D230 lie on the Extracellular side of the membrane. Residues I231–N252 traverse the membrane as a helical segment. G246 lines the L-leucine pocket. Residues Y253 to L265 lie on the Cytoplasmic side of the membrane. Residues P266 to Y287 form a helical membrane-spanning segment. At I288–G312 the chain is on the extracellular side. Residues V313–S338 form a helical membrane-spanning segment. Over R339 to P364 the chain is Cytoplasmic. Residues I365–S382 traverse the membrane as a helical segment. At D383–T386 the chain is on the extracellular side. The helical transmembrane segment at L387–V408 threads the bilayer. N395 contacts L-tryptophan. Topologically, residues L409 to N423 are cytoplasmic. The next 2 helical transmembrane spans lie at L424–P446 and V447–G466. Over V467–P535 the chain is Cytoplasmic. Residues G500 to P535 form a disordered region. The segment covering G524–P535 has biased composition (basic and acidic residues). Residue S529 is modified to Phosphoserine.

The protein belongs to the amino acid-polyamine-organocation (APC) superfamily. L-type amino acid transporter (LAT) (TC 2.A.3.8) family. Disulfide-linked heterodimer composed of the catalytic light chain subunit SLC7A8 and the heavy chain subunit SLC3A2. SLC3A2 acts as a chaperone for correct plasma membrane trafficking and stabilization of SLC7A8 and modulates the substrate affinity and specificity of SLC7A8. ICAM-1 associates with the heterodimer SLC3A2/SLC7A8; facilitates leucine uptake. As to expression, mainly expressed in kidney and small intestine.

The protein resides in the cell membrane. Its subcellular location is the basolateral cell membrane. The enzyme catalyses L-histidine(in) + L-phenylalanine(out) = L-histidine(out) + L-phenylalanine(in). The catalysed reaction is L-tryptophan(in) + L-phenylalanine(out) = L-tryptophan(out) + L-phenylalanine(in). It catalyses the reaction L-isoleucine(in) + L-phenylalanine(out) = L-isoleucine(out) + L-phenylalanine(in). It carries out the reaction L-valine(in) + L-phenylalanine(out) = L-valine(out) + L-phenylalanine(in). The enzyme catalyses L-leucine(in) + L-phenylalanine(out) = L-leucine(out) + L-phenylalanine(in). The catalysed reaction is L-glutamine(in) + L-phenylalanine(out) = L-glutamine(out) + L-phenylalanine(in). It catalyses the reaction L-cysteine(in) + L-phenylalanine(out) = L-cysteine(out) + L-phenylalanine(in). It carries out the reaction L-phenylalanine(out) + L-methionine(in) = L-phenylalanine(in) + L-methionine(out). The enzyme catalyses L-leucine(out) + L-methionine(in) = L-leucine(in) + L-methionine(out). The catalysed reaction is L-cysteine(out) + L-methionine(in) = L-cysteine(in) + L-methionine(out). It catalyses the reaction S-methylmercury-L-cysteine(out) + L-methionine(in) = S-methylmercury-L-cysteine(in) + L-methionine(out). It carries out the reaction S-methylmercury-L-cysteine(in) + L-leucine(out) = S-methylmercury-L-cysteine(out) + L-leucine(in). The enzyme catalyses S-methylmercury-L-cysteine(in) + L-phenylalanine(out) = S-methylmercury-L-cysteine(out) + L-phenylalanine(in). The catalysed reaction is L-phenylalanine(out) + L-serine(in) = L-phenylalanine(in) + L-serine(out). It catalyses the reaction L-phenylalanine(out) + glycine(in) = L-phenylalanine(in) + glycine(out). It carries out the reaction L-phenylalanine(out) + L-alanine(in) = L-phenylalanine(in) + L-alanine(out). The enzyme catalyses 3,3',5-triiodo-L-thyronine(out) = 3,3',5-triiodo-L-thyronine(in). The catalysed reaction is 3,3'-diiodo-L-thyronine(out) = 3,3'-diiodo-L-thyronine(in). It catalyses the reaction L-dopa(out) + L-phenylalanine(in) = L-dopa(in) + L-phenylalanine(out). The transporter activity is inhibited by 2-aminobicyclo-(2,2,1)heptane-2-carboxylic acid (BCH) (a specific inhibitor of system L transport). In terms of biological role, associates with SLC3A2 to form a functional heterodimeric complex that translocates small and large neutral amino acids with broad specificity and a stoichiometry of 1:1. Functions as amino acid antiporter mediating the influx of extracellular essential amino acids mainly in exchange with the efflux of highly concentrated intracellular amino acids. Has relatively symmetrical selectivities but strongly asymmetrical substrate affinities at both the intracellular and extracellular sides of the transporter. This asymmetry allows SLC7A8 to regulate intracellular amino acid pools (mM concentrations) by exchange with external amino acids (uM concentration range), equilibrating the relative concentrations of different amino acids across the plasma membrane instead of mediating their net uptake. May play an essential role in the reabsorption of neutral amino acids from the epithelial cells to the bloodstream in the kidney. Involved in the uptake of methylmercury (MeHg) when administered as the L-cysteine or D,L-homocysteine complexes, and hence plays a role in metal ion homeostasis and toxicity. Involved in the cellular activity of small molecular weight nitrosothiols, via the stereoselective transport of L-nitrosocysteine (L-CNSO) across the transmembrane. Imports the thyroid hormone diiodothyronine (T2) and to a smaller extent triiodothyronine (T3) but not rT 3 or thyroxine (T4). Mediates the uptake of L-DOPA. May participate in auditory function. This chain is Large neutral amino acids transporter small subunit 2, found in Oryctolagus cuniculus (Rabbit).